A 386-amino-acid polypeptide reads, in one-letter code: IgA receptor (386 aa).

A signal peptide spans 1 to 41 (MARKDTNKQYSLRKLKTGTASVAVAVAVLGAGFANQTEVKA). The tract at residues 42-152 (AEIKKPQADS…QKKHQQEQQQ (111 aa)) is igA-binding. Basic and acidic residues-rich tracts occupy residues 79–88 (YADDKEKDPQ), 97–128 (QDLR…EQLE), 134–166 (EADK…DKQI), 174–201 (LSRD…EKQI), 209–221 (LSRD…EAKK), 233–243 (EHQKLKEDKQI), and 251–267 (LSRD…KVEA). Disordered stretches follow at residues 79-221 (YADD…EAKK) and 233-268 (EHQK…VEAD). C repeat units follow at residues 158–192 (QKLA…EAEH), 193–227 (QKLK…EADL), and 235–269 (QKLK…EADL). D repeat units lie at residues 302–307 (ARLEAE), 308–313 (AKALKE), 316–321 (AKQAEE), and 323–328 (AKLKGN). Residues 323–360 (AKLKGNQTPNAKVAPQANRSRSAMTQQKRTLPSTGETA) are disordered. Positions 339-359 (ANRSRSAMTQQKRTLPSTGET) are enriched in polar residues. An LPXTG sorting signal motif is present at residues 353-357 (LPSTG). Threonine 356 bears the Pentaglycyl murein peptidoglycan amidated threonine mark. The propeptide at 357–386 (GETANPFFTAAAATVMVSAGMLALKRKEEN) is removed by sortase.

This sequence belongs to the M protein family.

It is found in the secreted. The protein resides in the cell wall. Functionally, binds IgA of both subclasses, and also binds polyclonal IgG weakly. The sequence is that of IgA receptor (arp4) from Streptococcus pyogenes.